The following is a 186-amino-acid chain: NADH-quinone oxidoreductase subunit B (186 aa).

Residues Cys44, Cys45, Cys110, and Cys139 each contribute to the [4Fe-4S] cluster site.

This sequence belongs to the complex I 20 kDa subunit family. NDH-1 is composed of 14 different subunits. Subunits NuoB, C, D, E, F, and G constitute the peripheral sector of the complex. The cofactor is [4Fe-4S] cluster.

The protein resides in the cell inner membrane. It carries out the reaction a quinone + NADH + 5 H(+)(in) = a quinol + NAD(+) + 4 H(+)(out). Its function is as follows. NDH-1 shuttles electrons from NADH, via FMN and iron-sulfur (Fe-S) centers, to quinones in the respiratory chain. The immediate electron acceptor for the enzyme in this species is believed to be ubiquinone. Couples the redox reaction to proton translocation (for every two electrons transferred, four hydrogen ions are translocated across the cytoplasmic membrane), and thus conserves the redox energy in a proton gradient. This chain is NADH-quinone oxidoreductase subunit B, found in Leptospira borgpetersenii serovar Hardjo-bovis (strain JB197).